The primary structure comprises 333 residues: L-lactate dehydrogenase B chain (333 aa).

Residues 29–57 (GQVGMACAVSILGKGLCDELALVDVLEDK) and Arg99 each bind NAD(+). 3 residues coordinate substrate: Arg106, Asn138, and Arg169. Residue Asn138 coordinates NAD(+). The Proton acceptor role is filled by His193. Thr248 contacts substrate.

The protein belongs to the LDH/MDH superfamily. LDH family. In terms of assembly, homotetramer.

It is found in the cytoplasm. It carries out the reaction (S)-lactate + NAD(+) = pyruvate + NADH + H(+). It participates in fermentation; pyruvate fermentation to lactate; (S)-lactate from pyruvate: step 1/1. In terms of biological role, interconverts simultaneously and stereospecifically pyruvate and lactate with concomitant interconversion of NADH and NAD(+). This chain is L-lactate dehydrogenase B chain (LDHB), found in Anas platyrhynchos (Mallard).